The chain runs to 400 residues: Argininosuccinate synthase (400 aa).

Residues Ala9–Ser17 and Ala37 each bind ATP. Tyr88 provides a ligand contact to L-citrulline. Gly118 is an ATP binding site. Residues Thr120, Asn124, and Asp125 each contribute to the L-aspartate site. Residue Asn124 participates in L-citrulline binding. L-citrulline is bound by residues Arg128, Ser176, Ser185, Glu261, and Tyr273.

The protein belongs to the argininosuccinate synthase family. Type 1 subfamily. Homotetramer.

The protein localises to the cytoplasm. It carries out the reaction L-citrulline + L-aspartate + ATP = 2-(N(omega)-L-arginino)succinate + AMP + diphosphate + H(+). It functions in the pathway amino-acid biosynthesis; L-arginine biosynthesis; L-arginine from L-ornithine and carbamoyl phosphate: step 2/3. The sequence is that of Argininosuccinate synthase from Prochlorococcus marinus (strain MIT 9211).